Here is a 547-residue protein sequence, read N- to C-terminus: Chaperonin GroEL (547 aa).

ATP is bound by residues 30–33, Lys51, 87–91, Gly415, 479–481, and Asp495; these read TLGP, DGTTT, and NAA.

This sequence belongs to the chaperonin (HSP60) family. As to quaternary structure, forms a cylinder of 14 subunits composed of two heptameric rings stacked back-to-back. Interacts with the co-chaperonin GroES.

The protein resides in the cytoplasm. The enzyme catalyses ATP + H2O + a folded polypeptide = ADP + phosphate + an unfolded polypeptide.. In terms of biological role, together with its co-chaperonin GroES, plays an essential role in assisting protein folding. The GroEL-GroES system forms a nano-cage that allows encapsulation of the non-native substrate proteins and provides a physical environment optimized to promote and accelerate protein folding. The polypeptide is Chaperonin GroEL (Marinomonas sp. (strain MWYL1)).